The chain runs to 566 residues: KsdD-like steroid dehydrogenase Rv0785 (566 aa).

FAD is bound at residue 23–54 (DAIVVGAGLAGLVAACELADRGLRVLILDQEN).

This sequence belongs to the FAD-dependent oxidoreductase 2 family. The cofactor is FAD.

Its pathway is lipid metabolism; steroid biosynthesis. Able to catalyze the elimination of the C-1 and C-2 hydrogen atoms of the A-ring from the polycyclic ring structure of 3-ketosteroids. The sequence is that of KsdD-like steroid dehydrogenase Rv0785 from Mycobacterium tuberculosis (strain ATCC 25618 / H37Rv).